We begin with the raw amino-acid sequence, 110 residues long: MEIEKTNRMNALFEFYAALLTDKQMNYIELYYADDYSLAEIAEEFGVSRQAVYDNIKRTEKILEDYEMKLHMYSDYIVRSQIFDQILERYPKDNFLQEQIEILTSIDNRE.

This sequence belongs to the UPF0122 family.

Might take part in the signal recognition particle (SRP) pathway. This is inferred from the conservation of its genetic proximity to ftsY/ffh. May be a regulatory protein. This Streptococcus pneumoniae (strain ATCC BAA-255 / R6) protein is UPF0122 protein spr1167.